A 131-amino-acid chain; its full sequence is Mesogenin-1 (131 aa).

The interval 22 to 79 (EDRSFGDSASSPESESFDSACSSPDARSSPTAGCEHAEQQKPKVKMSMRRRMKASERE) is disordered. Residues 27–45 (GDSASSPESESFDSACSSP) are compositionally biased toward low complexity. Residues 63 to 73 (PKVKMSMRRRM) show a composition bias toward basic residues. A bHLH domain is found at 70-124 (RRRMKASEREKLRMRSLAEALHQLRDYLPPGYSRRGQPLTKIQTLKYTIQYIKEL).

Coexpression of ntl and spt is required for expression.

The protein localises to the nucleus. Its function is as follows. Involved in specifying the paraxial, but not dorsal, mesoderm. May regulate the expression of T-box transcription factors required for mesoderm formation and differentiation. This is Mesogenin-1 (msgn1) from Danio rerio (Zebrafish).